A 931-amino-acid chain; its full sequence is Protein translocase subunit SecA (931 aa).

ATP is bound by residues Q87, G105–T109, and D515. Zn(2+)-binding residues include C915, C917, C926, and H927.

The protein belongs to the SecA family. In terms of assembly, monomer and homodimer. Part of the essential Sec protein translocation apparatus which comprises SecA, SecYEG and auxiliary proteins SecDF-YajC and YidC. Zn(2+) is required as a cofactor.

Its subcellular location is the cell inner membrane. It localises to the cytoplasm. The catalysed reaction is ATP + H2O + cellular proteinSide 1 = ADP + phosphate + cellular proteinSide 2.. Part of the Sec protein translocase complex. Interacts with the SecYEG preprotein conducting channel. Has a central role in coupling the hydrolysis of ATP to the transfer of proteins into and across the cell membrane, serving both as a receptor for the preprotein-SecB complex and as an ATP-driven molecular motor driving the stepwise translocation of polypeptide chains across the membrane. This Burkholderia ambifaria (strain ATCC BAA-244 / DSM 16087 / CCUG 44356 / LMG 19182 / AMMD) (Burkholderia cepacia (strain AMMD)) protein is Protein translocase subunit SecA.